A 148-amino-acid polypeptide reads, in one-letter code: Macrodomain Ter protein (148 aa).

It belongs to the MatP family. In terms of assembly, homodimer.

The protein resides in the cytoplasm. Required for spatial organization of the terminus region of the chromosome (Ter macrodomain) during the cell cycle. Prevents early segregation of duplicated Ter macrodomains during cell division. Binds specifically to matS, which is a 13 bp signature motif repeated within the Ter macrodomain. The chain is Macrodomain Ter protein from Haemophilus influenzae (strain PittGG).